A 362-amino-acid chain; its full sequence is Major capsid protein VP1 (362 aa).

Residues 5 to 19 (KRKGECPGAAPKKPK) carry the Bipartite nuclear localization signal motif. T338 carries the post-translational modification Phosphothreonine; by host.

This sequence belongs to the polyomaviruses coat protein VP1 family. Homomultimer; disulfide-linked. The virus capsid is composed of 72 icosahedral units, each one composed of five disulfide-linked copies of VP1. Interacts with minor capsid proteins VP2 and VP3.

The protein resides in the virion. The protein localises to the host nucleus. Functionally, forms an icosahedral capsid with a T=7 symmetry and a 40 nm diameter. The capsid is composed of 72 pentamers linked to each other by disulfide bonds and associated with VP2 or VP3 proteins. Interacts with sialic acids on the cell surface to provide virion attachment to target cell. Once attached, the virion is internalized by endocytosis and traffics to the endoplasmic reticulum. Inside the endoplasmic reticulum, the protein folding machinery isomerizes VP1 interpentamer disulfide bonds, thereby triggering initial uncoating. Next, the virion uses the endoplasmic reticulum-associated degradation machinery to probably translocate in the cytosol before reaching the nucleus. Nuclear entry of the viral DNA involves the selective exposure and importin recognition of VP2/Vp3 nuclear localization signal. In late phase of infection, neo-synthesized VP1 encapsulates replicated genomic DNA in the nucleus, and participates in rearranging nucleosomes around the viral DNA. The sequence is that of Major capsid protein VP1 from Simian virus 12 (strain wt100) (SV-12).